The sequence spans 187 residues: Peptide deformylase (187 aa).

Fe cation is bound by residues cysteine 107 and histidine 149. Residue glutamate 150 is part of the active site. Fe cation is bound at residue histidine 153.

Belongs to the polypeptide deformylase family. It depends on Fe(2+) as a cofactor.

The enzyme catalyses N-terminal N-formyl-L-methionyl-[peptide] + H2O = N-terminal L-methionyl-[peptide] + formate. Removes the formyl group from the N-terminal Met of newly synthesized proteins. Requires at least a dipeptide for an efficient rate of reaction. N-terminal L-methionine is a prerequisite for activity but the enzyme has broad specificity at other positions. The chain is Peptide deformylase from Microchaete diplosiphon (Fremyella diplosiphon).